The chain runs to 353 residues: MKYYLQKLIDGHDLSMVESEAAMGQILESATDAQVGAFVMGMKMKGETSDEVAGFAKGMLNVANMIRPKVDGILVDTCGTGGDRHNTINISTAAAIVAAAAGVTVAKHGNHSFTSLSGSADVFKELGVKIDLEPDLVKSSIEDIGIGFMLAPKFHPAMKRMVGPRKELAVRTMFNILGPLTNPTGAKAQVIGVFDKDLCNLMAEVLKKLGKEHVMVFHGDGMDEISTLSETFVAELKDGIISNYTLTPEELGVARAKATDIVGGTPEENAHDLLYILNGEKGAKRDIVVVNAAAAIYVAGLAISIKDAIPLAEEAIDSRKALNKLKELVEFTSGNKVDNEAFNTGQSLRNEVC.

5-phospho-alpha-D-ribose 1-diphosphate contacts are provided by residues Gly-79, Gly-82–Asp-83, Thr-87, Asn-89–Thr-92, Lys-107–Ser-115, and Ser-119. Residue Gly-79 participates in anthranilate binding. Position 91 (Ser-91) interacts with Mg(2+). Anthranilate is bound at residue Asn-110. Arg-165 contributes to the anthranilate binding site. Asp-223 and Glu-224 together coordinate Mg(2+).

Belongs to the anthranilate phosphoribosyltransferase family. As to quaternary structure, homodimer. Mg(2+) serves as cofactor.

It carries out the reaction N-(5-phospho-beta-D-ribosyl)anthranilate + diphosphate = 5-phospho-alpha-D-ribose 1-diphosphate + anthranilate. It participates in amino-acid biosynthesis; L-tryptophan biosynthesis; L-tryptophan from chorismate: step 2/5. Its function is as follows. Catalyzes the transfer of the phosphoribosyl group of 5-phosphorylribose-1-pyrophosphate (PRPP) to anthranilate to yield N-(5'-phosphoribosyl)-anthranilate (PRA). The polypeptide is Anthranilate phosphoribosyltransferase (Methanococcoides burtonii (strain DSM 6242 / NBRC 107633 / OCM 468 / ACE-M)).